The following is a 578-amino-acid chain: Kelch repeat-containing protein kel-10 (578 aa).

One can recognise a BTB domain in the interval 51–118 (PTVTLVLRNN…PKAFEQGIKP (68 aa)). Residues 158 to 236 (IKIFRLALLY…NSPLQSDRMA (79 aa)) enclose the BACK domain. Kelch repeat units lie at residues 265 to 315 (AIVC…VVED), 316 to 362 (KLIV…RIND), 368 to 414 (LIFA…TIDN), 416 to 462 (IVVI…SIMN), 464 to 510 (VCMI…QMDT), and 512 to 558 (SIYV…TLSD).

This Caenorhabditis elegans protein is Kelch repeat-containing protein kel-10.